Here is a 370-residue protein sequence, read N- to C-terminus: Ubiquitin carboxyl-terminal hydrolase 12 (370 aa).

The short motif at 1–4 is the Required for plasma membrane localization of USP12/WDR20 element; sequence MEIL. One can recognise a USP domain in the interval 39–369; sequence FGLVNFGNTC…SGYILFYQSR (331 aa). Cys48 functions as the Nucleophile in the catalytic mechanism. A compositionally biased stretch (basic and acidic residues) spans 146 to 157; it reads QEKQNGRLRNGD. The disordered stretch occupies residues 146–168; it reads QEKQNGRLRNGDVDNEDNNSTPD. Residues Cys186, Cys189, Cys233, and Cys236 each contribute to the Zn(2+) site. His317 acts as the Proton acceptor in catalysis.

The protein belongs to the peptidase C19 family. USP12/USP46 subfamily. Interacts with WDR48. Interacts with WDR20; this interaction promotes translocation of the USP12 complex to the plasma membrane. Component of the USP12/WDR20/WDR48 deubiquitinating complex. Component of the USP12/DMWD/WDR48 deubiquitinating complex. Interacts with PHLPP1. Interacts with RBPJ. Interacts with CBP; this interaction blocks the acetyltransferase activity of CREBBP.

It localises to the nucleus. The protein localises to the cytoplasm. The protein resides in the cell membrane. The enzyme catalyses Thiol-dependent hydrolysis of ester, thioester, amide, peptide and isopeptide bonds formed by the C-terminal Gly of ubiquitin (a 76-residue protein attached to proteins as an intracellular targeting signal).. Activated by interaction with WDR20; WDR48 and DMWD through different allosteric mechanisms. In terms of biological role, deubiquitinating enzyme that plays various roles in the regulation of the immune response and inflammation. During TCR engagement and activation, translocates into the cytoplasm and deubiquitinates its substrates LAT and TRAT1 and prevents their lysosome-dependent degradation to stabilize the TCR signaling complex at the plasma membrane. Plays an essential role in the selective LPS-induced macrophage response through the activation of NF-kappa-B pathway. In addition, promotes that antiviral immune response through targeting DNA sensor IFI16 to inhibit its proteasome-dependent degradation. Participates in the interferon signaling pathway and antiviral response independently of its deubiquitinase activity by maintaining nuclear phosphorylated STAT1 levels via inhibition of its CREBBP-mediated acetylation and subsequent dephosphorylation. Plays an intrinsic role in promoting the differentiation, activation and proliferation of CD4(+) T-cell by activating the NF-kappa-B signaling pathway through deubiquitinating and stabilizing B-cell lymphoma/leukemia 10/BCL10. In myeloid-derived suppressor cells promotes the activation of the NF-kappa-B via deubiquitination and stabilization of RELA. Regulates the 'Lys-63'-linked polyubiquitin chains of BAX and thereby modulates the mitochondrial apoptotic process. Negative regulator of NOTCH signaling that specifically deubiquitinates non-activated NOTCH receptors to target them for lysosomal degradation; deubiquitination of NOTCH stimulates its transport form late endosomes to lysosomes. Protects neurons against HTT/huntingtin-induced polyglutamine expansion-dependent neurodegeneration through regulation of autophagic flux. This function is independent of deubiquitinase activity or of other components of the USP12-WDR20-WDR48 deubiquitinating complex. In complex with WDR48, acts as a potential tumor suppressor by positively regulating PHLPP1 stability. The sequence is that of Ubiquitin carboxyl-terminal hydrolase 12 (Usp12) from Mus musculus (Mouse).